A 358-amino-acid chain; its full sequence is Heme A synthase (358 aa).

The next 8 membrane-spanning stretches (helical) occupy residues 22–42 (IQVW…VGGA), 107–127 (ILGR…WATK), 139–159 (IVPI…ASGI), 173–193 (AFHL…SRGF), 208–228 (FAGW…LVAG), 269–289 (FIHR…AFYV), 302–322 (AFFI…TLLR), and 324–344 (VPIG…CFSV). His271 contacts heme. His332 lines the heme pocket.

It belongs to the COX15/CtaA family. Type 2 subfamily. In terms of assembly, interacts with CtaB. Heme b is required as a cofactor.

It localises to the cell membrane. It catalyses the reaction Fe(II)-heme o + 2 A + H2O = Fe(II)-heme a + 2 AH2. It functions in the pathway porphyrin-containing compound metabolism; heme A biosynthesis; heme A from heme O: step 1/1. In terms of biological role, catalyzes the conversion of heme O to heme A by two successive hydroxylations of the methyl group at C8. The first hydroxylation forms heme I, the second hydroxylation results in an unstable dihydroxymethyl group, which spontaneously dehydrates, resulting in the formyl group of heme A. This chain is Heme A synthase, found in Bartonella quintana (strain Toulouse) (Rochalimaea quintana).